A 359-amino-acid chain; its full sequence is Proton-gated ion channel (359 aa).

An N-terminal signal peptide occupies residues 1-43 (MFPTGWRPKLSESIAASRMLWQPMAAVAVVQIGLLWFSPPVWG). Residues 44 to 235 (QDMVSPPPPI…LDYQLRISRQ (192 aa)) lie on the Periplasmic side of the membrane. A helical membrane pass occupies residues 236-258 (YFSYIPNIILPMLFILFISWTAF). At 259 to 261 (WST) the chain is on the cytoplasmic side. Residues 262–286 (SYEANVTLVVSTLIAHIAFNILVET) form a helical membrane-spanning segment. At 287–294 (NLPKTPYM) the chain is on the periplasmic side. Residues 295 to 323 (TYTGAIIFMIYLFYFVAVIEVTVQHYLKV) form a helical membrane-spanning segment. Residues 324-326 (ESQ) lie on the Cytoplasmic side of the membrane. The helical transmembrane segment at 327–359 (PARAASITRASRIAFPVVFLLANIILAFLFFGF) threads the bilayer.

This sequence belongs to the ligand-gated ion channel (TC 1.A.9) family. As to quaternary structure, homopentamer.

It is found in the cell inner membrane. Tetraethylammonium (TEA) and tetrabutylammonium (TBA) inhibit the proton-activated currents in a dose- and voltage-dependent manner in vitro, whereas the blocker of acid sensing ion channels, amiloride, has no effect. Channel current of GLIC can be inhibited by inhaled and intravenous general anesthetics at and below concentrations used clinically. Ion conduction is also inhibited by lidocaine and by divalent transition metal ions such as cadmium ions. In terms of biological role, cationic channel with similar permeabilities for Na(+) and K(+), that is activated by an increase of the proton concentration on the extracellular side. Displays no permeability for chloride ions. Shows slow kinetics of activation, no desensitization and a single channel conductance of 8 pS. Might contribute to adaptation to external pH change. The chain is Proton-gated ion channel (glvI) from Gloeobacter violaceus (strain ATCC 29082 / PCC 7421).